The primary structure comprises 122 residues: MHELSMADAIVRTVIDAAEKNDAVEVLEVTVEIGQLTLLNPEQIEFMLDVLSEGTILEGARFNLEVVPVEIECECGYEGVVEADELDHFAPVIKCPACGGHEFHVRAGRECNVKNIKIEKKD.

Position 2 (His-2) interacts with Ni(2+). Residues Cys-73, Cys-75, Cys-95, and Cys-98 each contribute to the Zn(2+) site.

It belongs to the HypA/HybF family.

Involved in the maturation of [NiFe] hydrogenases. Required for nickel insertion into the metal center of the hydrogenase. The polypeptide is Hydrogenase maturation factor HypA (Methanothermobacter thermautotrophicus (strain ATCC 29096 / DSM 1053 / JCM 10044 / NBRC 100330 / Delta H) (Methanobacterium thermoautotrophicum)).